Consider the following 348-residue polypeptide: Fructose-1,6-bisphosphatase class 1 (348 aa).

Mg(2+) is bound by residues Glu104, Asp126, Leu128, and Asp129. Substrate is bound by residues 129–132 (DGSS), Asn221, Tyr249, and Lys279. Glu285 is a binding site for Mg(2+).

The protein belongs to the FBPase class 1 family. As to quaternary structure, homotetramer. Mg(2+) is required as a cofactor.

It is found in the cytoplasm. It catalyses the reaction beta-D-fructose 1,6-bisphosphate + H2O = beta-D-fructose 6-phosphate + phosphate. It functions in the pathway carbohydrate biosynthesis; Calvin cycle. The chain is Fructose-1,6-bisphosphatase class 1 from Thermosynechococcus vestitus (strain NIES-2133 / IAM M-273 / BP-1).